A 256-amino-acid chain; its full sequence is Cytochrome c-type biogenesis protein CcmE homolog, mitochondrial (256 aa).

Residues Met1–Leu57 constitute a mitochondrion transit peptide. A helical membrane pass occupies residues Leu84 to Gln106. 2 residues coordinate heme: His222 and Tyr226.

It belongs to the CcmE/CycJ family.

The protein resides in the mitochondrion inner membrane. The protein localises to the mitochondrion intermembrane space. In terms of biological role, heme-binding chaperone that may be involved in cytochrome c maturation in mitochondria. The polypeptide is Cytochrome c-type biogenesis protein CcmE homolog, mitochondrial (Arabidopsis thaliana (Mouse-ear cress)).